Reading from the N-terminus, the 78-residue chain is uncharacterized protein (78 aa).

This is an uncharacterized protein from Archaeoglobus fulgidus (strain ATCC 49558 / DSM 4304 / JCM 9628 / NBRC 100126 / VC-16).